Here is a 937-residue protein sequence, read N- to C-terminus: Hyphally-regulated protein (937 aa).

The N-terminal stretch at 1 to 20 is a signal peptide; it reads MKVVSNFIFTILLTLNLSAA. Residue Asn16 is glycosylated (N-linked (GlcNAc...) asparagine). A helical membrane pass occupies residues 42-62; it reads VHSGATWAILGTTLCSFFGGL. Asn236 is a glycosylation site (N-linked (GlcNAc...) asparagine). Positions 332-483 are disordered; it reads SAPESESDLN…QSITSSPGQS (152 aa). The span at 344-392 shows a compositional bias: low complexity; sequence TTSSIETSSYSSAATESSVVSESSSAVDSLTSSSLSSKSESSDVVSSTT. Residues 393–414 show a composition bias toward polar residues; that stretch reads NIESSSTAIETTMNSESSTDAG. Residues 415 to 475 are compositionally biased toward low complexity; it reads SSSISQSESS…SNALSSTEQS (61 aa). 6 N-linked (GlcNAc...) asparagine glycosylation sites follow: Asn449, Asn488, Asn580, Asn585, Asn595, and Asn603. Residues 567 to 590 show a composition bias toward low complexity; that stretch reads DATTTTTTSTGGDNSTGGNESGSN. Residues 567 to 857 are disordered; the sequence is DATTTTTTST…VANPVTTSTE (291 aa). A compositionally biased stretch (gly residues) spans 591–609; the sequence is HGPGNGSTEGSGNGSGAGS. The stretch at 610–613 is repeat 1; the sequence is NEGS. Residues 610 to 753 are 7 X 4 AA repeats of N-E-G-S; the sequence is NEGSQSGPNN…GAGNGSNEGS (144 aa). N-linked (GlcNAc...) asparagine glycosylation is found at Asn619, Asn631, Asn641, and Asn649. Gly residues-rich tracts occupy residues 619–631 and 641–665; these read NGSG…GSNN and NGSG…GSGS. Tandem repeats lie at residues 666 to 669, 680 to 683, 690 to 693, and 698 to 701. Residues 666-682 show a composition bias toward low complexity; the sequence is NEGSQSGSGSQPGPNEG. The span at 699–725 shows a compositional bias: gly residues; sequence EGSGSGSGSGSNNGSGSGSQSGSGSGS. N-linked (GlcNAc...) asparagine glycosylation occurs at Asn711. Residues 726-742 show a composition bias toward low complexity; sequence QSGSESGSNSGSNEGSN. The stretch at 738 to 741 is repeat 6; sequence NEGS. Gly residues predominate over residues 743-801; the sequence is PGAGNGSNEGSGQGSGNGSEAGSGQGSGPNNGSGSGHNDGSGSGSNQGSNPGAGSGSGS. N-linked (GlcNAc...) asparagine glycosylation is present at Asn747. The stretch at 750–753 is repeat 7; that stretch reads NEGS. Asn759 and Asn773 each carry an N-linked (GlcNAc...) asparagine glycan. The segment covering 802–814 has biased composition (low complexity); the sequence is ESGSKAGSHSGSN. Over residues 817 to 829 the composition is skewed to basic and acidic residues; sequence AKTDSIEGFHTES. The segment covering 841 to 851 has biased composition (polar residues); that stretch reads ATVTGNSVANP. Residues Asn897 and Asn913 are each glycosylated (N-linked (GlcNAc...) asparagine). Asn913 carries the GPI-anchor amidated asparagine lipid modification. Residues 914–937 constitute a propeptide, removed in mature form; that stretch reads GSSIVTGGKSILFGLIVSMVVLFM.

Its subcellular location is the cell membrane. It is found in the secreted. It localises to the cell wall. In terms of biological role, nonessential component of the hyphal cell wall. The protein is Hyphally-regulated protein (HYR1) of Candida albicans (Yeast).